The sequence spans 313 residues: ADP-L-glycero-D-manno-heptose-6-epimerase (313 aa).

Residues 10-11 (MI), 31-32 (DN), lysine 38, arginine 53, 75-79 (EGACS), and asparagine 92 each bind NADP(+). Tyrosine 139 serves as the catalytic Proton acceptor. Lysine 143 is an NADP(+) binding site. A substrate-binding site is contributed by asparagine 174. NADP(+) is bound by residues valine 175 and lysine 183. The Proton acceptor role is filled by lysine 183. Residues serine 185, histidine 192, 206-209 (FAGS), arginine 214, and tyrosine 277 each bind substrate.

It belongs to the NAD(P)-dependent epimerase/dehydratase family. HldD subfamily. In terms of assembly, homopentamer. NADP(+) is required as a cofactor.

It catalyses the reaction ADP-D-glycero-beta-D-manno-heptose = ADP-L-glycero-beta-D-manno-heptose. Its pathway is nucleotide-sugar biosynthesis; ADP-L-glycero-beta-D-manno-heptose biosynthesis; ADP-L-glycero-beta-D-manno-heptose from D-glycero-beta-D-manno-heptose 7-phosphate: step 4/4. The protein operates within bacterial outer membrane biogenesis; LPS core biosynthesis. Catalyzes the interconversion between ADP-D-glycero-beta-D-manno-heptose and ADP-L-glycero-beta-D-manno-heptose via an epimerization at carbon 6 of the heptose. The protein is ADP-L-glycero-D-manno-heptose-6-epimerase of Vibrio vulnificus (strain CMCP6).